The following is a 321-amino-acid chain: NADPH-dependent codeinone reductase 1-1 (321 aa).

The NADPH site is built by Thr27 and Asp51. Active-site proton donor residues include Tyr56 and His119. His119 serves as a coordination point for substrate. Positions 187, 214, 216, 264, and 269 each coordinate NADPH.

The protein belongs to the aldo/keto reductase family. As to expression, latex secreting cells (laticifer cells). Expressed constitutively and ubiquitously with highest levels in capsules. Restricted to the parietal region of sieve elements adjacent or proximal to laticifers in roots, stems, leaves and carpels.

It localises to the cytoplasm. Its subcellular location is the cytosol. It catalyses the reaction codeine + NADP(+) = codeinone + NADPH + H(+). It carries out the reaction neopine + NADP(+) = neopinone + NADPH + H(+). The catalysed reaction is morphine + NADP(+) = morphinone + NADPH + H(+). The enzyme catalyses neomorphine + NADP(+) = neomorphinone + NADPH + H(+). It functions in the pathway alkaloid biosynthesis; morphine biosynthesis. In terms of biological role, NADPH-dependent reductase involved in biosynthesis of morphinan-type benzylisoquinoline and opiate alkaloids natural products. Reduces codeinone to codeine in the penultimate step in morphine biosynthesis. Can use morphinone, hydrocodone and hydromorphone as substrate during reductive reaction with NADPH as cofactor, and morphine and dihydrocodeine as substrate during oxidative reaction with NADP as cofactor. Converts morphinone to morphine, and neomorphinone to neomorphine. Reduces irreversibly neopinone, a spontaneous isomer of codeinone, to neopine; in planta, neopine levels are limited to low levels. The sequence is that of NADPH-dependent codeinone reductase 1-1 from Papaver somniferum (Opium poppy).